A 198-amino-acid polypeptide reads, in one-letter code: Na(+)-translocating NADH-quinone reductase subunit E (198 aa).

6 consecutive transmembrane segments (helical) span residues 11–31 (SIFI…FLAV), 39–59 (MGLG…NNLI), 77–97 (FLSF…LEMA), 110–130 (GIFL…SFMV), 140–160 (VVYG…MAGI), and 176–196 (LGIT…FSGI).

It belongs to the NqrDE/RnfAE family. As to quaternary structure, composed of six subunits; NqrA, NqrB, NqrC, NqrD, NqrE and NqrF.

Its subcellular location is the cell inner membrane. The catalysed reaction is a ubiquinone + n Na(+)(in) + NADH + H(+) = a ubiquinol + n Na(+)(out) + NAD(+). NQR complex catalyzes the reduction of ubiquinone-1 to ubiquinol by two successive reactions, coupled with the transport of Na(+) ions from the cytoplasm to the periplasm. NqrA to NqrE are probably involved in the second step, the conversion of ubisemiquinone to ubiquinol. This Aeromonas salmonicida (strain A449) protein is Na(+)-translocating NADH-quinone reductase subunit E.